A 280-amino-acid chain; its full sequence is Nucleotide-binding protein Mfla_0145 (280 aa).

8 to 15 (GLSGSGKS) contacts ATP. 57–60 (DTRS) provides a ligand contact to GTP.

This sequence belongs to the RapZ-like family.

Functionally, displays ATPase and GTPase activities. The protein is Nucleotide-binding protein Mfla_0145 of Methylobacillus flagellatus (strain ATCC 51484 / DSM 6875 / VKM B-1610 / KT).